The sequence spans 1031 residues: Beta-galactosidase (1031 aa).

Substrate is bound by residues Asn98 and Asp197. Na(+) is bound at residue Asp197. Mg(2+)-binding residues include Glu412, His414, and Glu457. Residues Glu457 and 533-536 each bind substrate; that span reads EYAH. The Proton donor role is filled by Glu457. Glu533 acts as the Nucleophile in catalysis. Asn593 serves as a coordination point for Mg(2+). Phe597 and Asp600 together coordinate Na(+). Asp600 and Trp1005 together coordinate substrate.

This sequence belongs to the glycosyl hydrolase 2 family. In terms of assembly, homotetramer. Mg(2+) is required as a cofactor. It depends on Na(+) as a cofactor.

The catalysed reaction is Hydrolysis of terminal non-reducing beta-D-galactose residues in beta-D-galactosides.. The sequence is that of Beta-galactosidase from Oenococcus oeni (strain ATCC BAA-331 / PSU-1).